The primary structure comprises 155 residues: uncharacterized protein (155 aa).

Residues 6-155 form the N-acetyltransferase domain; the sequence is TCVRNARLAD…CDEIAMVKTL (150 aa).

Belongs to the acetyltransferase family.

This is an uncharacterized protein from Chlorobaculum tepidum (strain ATCC 49652 / DSM 12025 / NBRC 103806 / TLS) (Chlorobium tepidum).